The chain runs to 152 residues: MQMSEPLSQKNALYTAMNRFLGAVNNMDQTVMVPSLLRDVPLDQEKEQQKLTNDPGSYLREAEADMYSYYSQLKSIRNNIEWGVIRSEDQRRKKDTSASEPVRTEEESDMDLEQLLQFHLKGLHGVLSQLTSQANNLTNRYKQEIGISGWGQ.

A compositionally biased stretch (basic and acidic residues) spans 87–105 (SEDQRRKKDTSASEPVRTE). Residues 87 to 109 (SEDQRRKKDTSASEPVRTEEESD) are disordered.

This sequence belongs to the SPOT14 family. In terms of tissue distribution, expressed for a short period in the cells that will produce the enveloping layer (EVL).

It localises to the nucleus. The protein localises to the cytoplasm. The protein resides in the cytoskeleton. Its function is as follows. Involved in stabilization of microtubules. May play a role in the regulation of lipogenesis. The sequence is that of Mid1-interacting protein 1A (mid1ip1a) from Danio rerio (Zebrafish).